We begin with the raw amino-acid sequence, 314 residues long: Methionyl-tRNA formyltransferase (314 aa).

A (6S)-5,6,7,8-tetrahydrofolate-binding site is contributed by 108–111; sequence SLLP.

Belongs to the Fmt family.

It catalyses the reaction L-methionyl-tRNA(fMet) + (6R)-10-formyltetrahydrofolate = N-formyl-L-methionyl-tRNA(fMet) + (6S)-5,6,7,8-tetrahydrofolate + H(+). Attaches a formyl group to the free amino group of methionyl-tRNA(fMet). The formyl group appears to play a dual role in the initiator identity of N-formylmethionyl-tRNA by promoting its recognition by IF2 and preventing the misappropriation of this tRNA by the elongation apparatus. The chain is Methionyl-tRNA formyltransferase from Akkermansia muciniphila (strain ATCC BAA-835 / DSM 22959 / JCM 33894 / BCRC 81048 / CCUG 64013 / CIP 107961 / Muc).